A 67-amino-acid polypeptide reads, in one-letter code: Guanine nucleotide-binding protein G(I)/G(S)/G(O) subunit gamma-13 (67 aa).

Cys-64 bears the Cysteine methyl ester mark. A lipid anchor (S-farnesyl cysteine) is attached at Cys-64. Residues 65 to 67 constitute a propeptide, removed in mature form; sequence TIL.

The protein belongs to the G protein gamma family. G proteins are composed of 3 units, alpha, beta and gamma.

The protein localises to the cell membrane. In terms of biological role, guanine nucleotide-binding proteins (G proteins) are involved as a modulator or transducer in various transmembrane signaling systems. The beta and gamma chains are required for the GTPase activity, for replacement of GDP by GTP, and for G protein-effector interaction. The chain is Guanine nucleotide-binding protein G(I)/G(S)/G(O) subunit gamma-13 (GNG13) from Homo sapiens (Human).